A 313-amino-acid chain; its full sequence is MNIIFYHPFFNAEEWLAGLSQRLPQAQVRAWQPGDDRPADYALVWRPPHEMLANRGRLKGVFALGAGVDAILEQERAYPGTLPAGVPLLRLEDTGMAQQMQEYALSYVLRYFRRFDEYQLLQQQQEWRPLDPHQQDNFTIGILGAGVLGKSVAQKLTAFGFNVRCWSRSPKQIDGVQSFAGAEQRAAFLDGVQLLINLLPNTPETAGILNQQLFAHLAPGAYLINLARGAHLVEDDLLQALEQGQLAAATLDVFVTEPLPQAHPFWRHPRVTITPHIAAITLPQAAMDQIAANILALEAGQTPAGVVDVLLGY.

Residue R228 is part of the active site. The Proton donor role is filled by H276.

The protein belongs to the D-isomer specific 2-hydroxyacid dehydrogenase family. GhrA subfamily.

Its subcellular location is the cytoplasm. It carries out the reaction glycolate + NADP(+) = glyoxylate + NADPH + H(+). The enzyme catalyses (R)-glycerate + NAD(+) = 3-hydroxypyruvate + NADH + H(+). The catalysed reaction is (R)-glycerate + NADP(+) = 3-hydroxypyruvate + NADPH + H(+). Functionally, catalyzes the NADPH-dependent reduction of glyoxylate and hydroxypyruvate into glycolate and glycerate, respectively. The protein is Glyoxylate/hydroxypyruvate reductase A of Serratia proteamaculans (strain 568).